The primary structure comprises 350 residues: UDP-3-O-acylglucosamine N-acyltransferase (350 aa).

His244 (proton acceptor) is an active-site residue.

This sequence belongs to the transferase hexapeptide repeat family. LpxD subfamily. As to quaternary structure, homotrimer.

It carries out the reaction a UDP-3-O-[(3R)-3-hydroxyacyl]-alpha-D-glucosamine + a (3R)-hydroxyacyl-[ACP] = a UDP-2-N,3-O-bis[(3R)-3-hydroxyacyl]-alpha-D-glucosamine + holo-[ACP] + H(+). Its pathway is bacterial outer membrane biogenesis; LPS lipid A biosynthesis. Functionally, catalyzes the N-acylation of UDP-3-O-acylglucosamine using 3-hydroxyacyl-ACP as the acyl donor. Is involved in the biosynthesis of lipid A, a phosphorylated glycolipid that anchors the lipopolysaccharide to the outer membrane of the cell. The sequence is that of UDP-3-O-acylglucosamine N-acyltransferase from Janthinobacterium sp. (strain Marseille) (Minibacterium massiliensis).